The chain runs to 760 residues: Xaa-Pro dipeptidyl-peptidase (760 aa).

Catalysis depends on charge relay system residues Ser-349, Asp-469, and His-499.

Belongs to the peptidase S15 family. Homodimer.

The protein localises to the cytoplasm. It catalyses the reaction Hydrolyzes Xaa-Pro-|- bonds to release unblocked, N-terminal dipeptides from substrates including Ala-Pro-|-p-nitroanilide and (sequentially) Tyr-Pro-|-Phe-Pro-|-Gly-Pro-|-Ile.. Removes N-terminal dipeptides sequentially from polypeptides having unsubstituted N-termini provided that the penultimate residue is proline. This is Xaa-Pro dipeptidyl-peptidase from Streptococcus pyogenes serotype M4 (strain MGAS10750).